The following is a 534-amino-acid chain: MDNYTWHSGTLIPSDSPSSIDRSQLYLEILGVLSVVYLLQTLVAYSKSFKAPFVGFRFWYEPKWLVGLRFSQGALAQVNEGYAKYKNAMFKVARNDSDILVIPNKYVEELRSLPDEKISAIRAHIKNLLGKYSTTLILLESDLHTRMLQTKLTPNLGSFIEVIESELLFAMDQEIPANLDDWQSVNVFHIVLRIVARISARVFLGVPACRNEEWLQTSIHYTENVFATVMLLRRFPKWMHPIVGHLLPSYWAIHRNLRTAKRIISPMVRQRRAEEAKRNPDYVKPNDLLQWMMDGANENDGQPDKLAHRQLLLSLASIHTTTMAAAHCFYDLCQHPEYFEPLREEINDVIAQDGGWKKTTLNKMRKLDSFLKESQRINPPSLLAFNRIVSEDLTLSDGTLLPKGTHFSMPSAAILQDNGVEPGADQFDGFRYYKKRLNPEEANKHQFAMTDNNNLHFGHGKYSCPGRFFASNEIKIIMAHLLTDYEFKYPRGATRPRNLTADENLYPDPSARLLMRRRVVAPPQASITPQLVSA.

N-linked (GlcNAc...) asparagine glycosylation occurs at N3. A helical transmembrane segment spans residues 25-45; sequence LYLEILGVLSVVYLLQTLVAY. N95 carries N-linked (GlcNAc...) asparagine glycosylation. Position 464 (C464) interacts with heme. An N-linked (GlcNAc...) asparagine glycan is attached at N498.

This sequence belongs to the cytochrome P450 family. It depends on heme as a cofactor.

Its subcellular location is the membrane. The protein operates within secondary metabolite biosynthesis; terpenoid biosynthesis. Functionally, bifunctional terpene synthase; part of the gene cluster that mediates the biosynthesis of the diterpene ent-pimara-8(14),15-diene (PD). Within the cluster, the HMG-CoA reductase AN1593 functions in the mevalonate pathway, which produces isoprenoid precursors. The geranylgeranyl pyrophosphate (GGPP) synthase AN1592 is needed in the formation of GGPP, the precursor for diterpenes. Lastly, the pimaradiene synthase pbcA performs the 2 cyclization steps that convert GGPP to ent-pimara-8(14),15-diene. The putative roles of the remaining cluster enzymes in ent-pimara-8(14),15-diene biosynthesis is unclear. The cytochrome P450 monooxygenase AN1598, the glutathione S-transferase AN1595, the oxidoreductases AN1596 and AN1597 probably function as decorative enzymes. It is possible that in biological conditions the compound is oxidized to ent-pimara-8(14),15-dien-19-oic acid, which is a bioactive diterpene compound predominant in many plant extracts. The sequence is that of Cytochrome P450 monooxygenase AN1598 from Emericella nidulans (strain FGSC A4 / ATCC 38163 / CBS 112.46 / NRRL 194 / M139) (Aspergillus nidulans).